Here is a 208-residue protein sequence, read N- to C-terminus: Large ribosomal subunit protein uL3 (208 aa).

The interval 116–148 (GFQGVIKRHGQSRGPMAHGSRYHRRPGSMGPVA) is disordered.

The protein belongs to the universal ribosomal protein uL3 family. Part of the 50S ribosomal subunit. Forms a cluster with proteins L14 and L19.

In terms of biological role, one of the primary rRNA binding proteins, it binds directly near the 3'-end of the 23S rRNA, where it nucleates assembly of the 50S subunit. The protein is Large ribosomal subunit protein uL3 of Streptococcus pyogenes serotype M6 (strain ATCC BAA-946 / MGAS10394).